The primary structure comprises 152 residues: Ribonuclease H (152 aa).

The RNase H type-1 domain occupies 1–142; it reads MDSKVVIYTD…ADKLAVQGRE (142 aa). Residues Asp10, Glu48, Asp70, and Asp134 each coordinate Mg(2+).

It belongs to the RNase H family. Monomer. Requires Mg(2+) as cofactor.

Its subcellular location is the cytoplasm. The catalysed reaction is Endonucleolytic cleavage to 5'-phosphomonoester.. Functionally, endonuclease that specifically degrades the RNA of RNA-DNA hybrids. The protein is Ribonuclease H of Rickettsia typhi (strain ATCC VR-144 / Wilmington).